Reading from the N-terminus, the 1085-residue chain is Protein IFH1 (1085 aa).

Disordered regions lie at residues 1 to 251 (MAGK…QQAL), 283 to 302 (KNKE…VMLG), 457 to 493 (SKLK…TSNV), 507 to 622 (DDEN…DSSV), 676 to 700 (VDDE…IGSK), and 747 to 774 (QLRE…GDEL). Composition is skewed to polar residues over residues 9–18 (KSTINHSTHS) and 39–48 (RQSPPTLSTT). Over residues 54-66 (SLIYSSESSLSDV) the composition is skewed to low complexity. Positions 76-85 (NPHKIKRKAK) are enriched in basic residues. Residues 120–165 (DGEESENEEEESEEEEEDDDEDDDDDDDDGSDSDSDSETSSDDENI) are compositionally biased toward acidic residues. A compositionally biased stretch (polar residues) spans 184–197 (AMNTNSNTLYSSRE). A Phosphoserine modification is found at serine 208. Over residues 209-239 (PKKENEEEQKEEKEKEKEEQQKQQESNKKEV) the composition is skewed to basic and acidic residues. The segment covering 241-251 (GSGTTTTQQAL) has biased composition (polar residues). Positions 283-297 (KNKENNGNEEDKLDS) are enriched in basic and acidic residues. Basic residues predominate over residues 474-483 (QRRKLYKKTQ). Over residues 484-493 (KPSTRTTSNV) the composition is skewed to polar residues. The span at 513–524 (HKSKKGRHKSGK) shows a compositional bias: basic residues. The span at 546–557 (STHSTVLNSGKY) shows a compositional bias: polar residues. Over residues 584 to 599 (ETSHDADTDEELRALD) the composition is skewed to basic and acidic residues. 2 stretches are compositionally biased toward acidic residues: residues 607-620 (TELD…DDDS) and 676-686 (VDDESTDEDDN). Over residues 747–764 (QLREQHQRAQTPDVKREG) the composition is skewed to basic and acidic residues. Position 1041 is a phosphoserine (serine 1041).

This sequence belongs to the IFH1 family.

It localises to the nucleus. Its function is as follows. Transcriptional coactivator that together with FHL1 regulates the expression of rRNA and ribosomal protein genes. Its activity is negatively regulated by environmental stress. The polypeptide is Protein IFH1 (IFH1) (Saccharomyces cerevisiae (strain ATCC 204508 / S288c) (Baker's yeast)).